The primary structure comprises 857 residues: MASKRGSNQDESIFRIPPYYYIHVLDHNDNVTKVVVGPKTYIRQDHERVIFGPEKMITIPPRHYCIIENPVVRNDTDQVVYDNLGQVKLFHADQEIRLAREPFPLYPGEVLKQAVTALKVVQANAALRLRAILDFEDGTQKRVAGDEWLFEGPGTYIPRKEVVVDETIRATIIRPNQAIKLRARKETNDREGTARVTGEEWQVKKVGAYLPGAYEEVVDTVNAYVLTEKNALHLRATRTFVDMKGKTRKNGEEWLINMADTDAHIPDVYEEVVGVVDINTLTNRQYCVIVDPVGPDGKPQLGQKKLVKGEVSFFLQPGETLEQGIQSVFILGEDEGLILRAQESFKDANAAGAVRQPGDRWMIRGPCEYVPTVELEVVTRRKAIPLDENEGVYIRDTKTGKVRAVTGETYMLSQDEELWAKELSPAVEELLQSAKDPVAERSDRRGDRAAPRAREKTRVISFRVPHNAAVQIYDYKEKKARVVFGPELVMLGPDEQFTQLSLSGGKPKRPNVIKALCLLLGPDFCTDIITIETADHARLQLQLSYNWHFDVPDKTDVAASAKLFSVPDFIGDACKAIASRIRGAVAGVQFDDFHKNSAKIIRASVFGFDEKNKVRERFLFPQNSLVITSIDIQSVEPVDQRTRDALQKSVQLAIEITTNSQEATARHEAERLEQEARGRLERQKIMDEAEAEKSRKELLELQANSAAVESTGQAKAEAQSRAEAARIEGEAAVDQARLKAEAAKIESESELQRLTNAREAETKYVREQNALEVNKTKQMSDIETERFRNMVQSIGADTIKAMAMAGPEMQVKLLSSLGLKSTLITDGSTPINLFNTAQGLLGGFSAKRGIEHVEEED.

8 MVP repeats span residues 18–60 (PYYY…ITIP), 62–122 (RHYC…KVVQ), 123–174 (ANAA…TIIR), 175–227 (PNQA…YVLT), 228–282 (EKNA…NTLT), 284–332 (RQYC…FILG), 333–387 (EDEG…IPLD), and 388–441 (ENEG…VAER). The interval 434–453 (AKDPVAERSDRRGDRAAPRA) is disordered. Over residues 437 to 453 (PVAERSDRRGDRAAPRA) the composition is skewed to basic and acidic residues. The 30-residue stretch at 665-694 (ARHEAERLEQEARGRLERQKIMDEAEAEKS) folds into the IQ domain.

As to quaternary structure, the vault ribonucleoprotein particle is a huge (400 A x 670 A) cage structure of 12.9 MDa. It consists of a dimer of half-vaults, with each half-vault comprising 39 identical major vault protein (MVP) chains, PARP4 and one or more vault RNAs (vRNAs). In terms of tissue distribution, expressed in embryos, tube feet and coelomocytes (at protein level). Not expressed in sperm cells (at protein level).

The protein localises to the cytoplasm. The protein resides in the nucleus. Functionally, required for normal vault structure. Vaults are multi-subunit structures that may act as scaffolds for proteins involved in signal transduction. Vaults may also play a role in nucleo-cytoplasmic transport. The polypeptide is Major vault protein (Strongylocentrotus purpuratus (Purple sea urchin)).